Reading from the N-terminus, the 382-residue chain is MKALHFGAGNIGRGFIGKLLADAGIELTFADVNQTVLDALNARHSYQVHVVGENEQVDTVSGVNAVSSIGDEVVDLIAEVDLVTTAVGPVVLERIAPAIAKGLAKRKAQGSERPLNIIACENMVRGTTQLKGHVFNALAEEDKAWVEAHIGFVDSAVDRIVPPSASATHDPLEVTVETFSEWIVDKTQFKGALPTIPGMELTDNLMAFVERKLFTLNTGHAITAYLGKLAGHQTIRDAILDEKIRAVVQGAMEESGAVLIKRYAFDPQKHAAYIQKILGRFENPYLKDDVERVGRQPLRKLSAGDRLIKPLLGTLEYGLPHRNLVKGIAAAMHFRSEDDPQAQELAALIADKGPQAALAQISGLDAASDVVAEAVNDYNAEK.

NAD(+) is bound at residue 3-14 (ALHFGAGNIGRG).

Belongs to the mannitol dehydrogenase family.

It carries out the reaction D-mannitol 1-phosphate + NAD(+) = beta-D-fructose 6-phosphate + NADH + H(+). The sequence is that of Mannitol-1-phosphate 5-dehydrogenase from Klebsiella pneumoniae (strain 342).